The sequence spans 218 residues: Cytidylate kinase (218 aa).

An ATP-binding site is contributed by 7 to 15; it reads GPSASGKSS.

The protein belongs to the cytidylate kinase family. Type 1 subfamily.

The protein resides in the cytoplasm. It catalyses the reaction CMP + ATP = CDP + ADP. The catalysed reaction is dCMP + ATP = dCDP + ADP. This chain is Cytidylate kinase, found in Borrelia duttonii (strain Ly).